The sequence spans 295 residues: MEKKLTLLLLVVVVLFVNLTNATVRVQICPRESAKDYILGFRDKSALHRPGFVTEGDDRWLQMAADMVDKKNKCDYAALLFYASWCPFSRLVRPSFDLMSLLYSSVPHFAIEESSVKASTLSKYGVHGFPTIILMNSTMLVVYRGSRTLDSLVAFYTDVTGIETMDERWVERNRLVPHFHAEPENCPFPWARRSPENLLRQETYLTLATVFVLLRLLHLISPTMVVFVKFTWGRVSNMRLGNPLEHTVTMYLKEPCMSSNLQEGAMNARAWASKSLATVSIAESSSSSRSVSASQ.

Residues 1 to 22 (MEKKLTLLLLVVVVLFVNLTNA) form the signal peptide. The Thioredoxin domain maps to 23 to 161 (TVRVQICPRE…LVAFYTDVTG (139 aa)). A glycan (N-linked (GlcNAc...) asparagine) is linked at asparagine 136. Residues 208–228 (ATVFVLLRLLHLISPTMVVFV) traverse the membrane as a helical segment.

Its subcellular location is the membrane. This Arabidopsis thaliana (Mouse-ear cress) protein is 5'-adenylylsulfate reductase-like 6 (APRL6).